A 221-amino-acid polypeptide reads, in one-letter code: Endo-1,4-beta-xylanase 11A (221 aa).

Residues 1–18 form the signal peptide; it reads MKFATVLAFATAAGAAFA. The region spanning 23–220 is the GH11 domain; it reads SSETTEAGQL…GTGSASMSVS (198 aa). Glu111 serves as the catalytic Nucleophile. N-linked (GlcNAc...) asparagine glycosylation is present at Asn117. The Proton donor role is filled by Glu207.

The protein belongs to the glycosyl hydrolase 11 (cellulase G) family.

It is found in the secreted. The catalysed reaction is Endohydrolysis of (1-&gt;4)-beta-D-xylosidic linkages in xylans.. It functions in the pathway glycan degradation; xylan degradation. Functionally, endo-1,4-beta-xylanase involved in the hydrolysis of xylan, a major structural heterogeneous polysaccharide found in plant biomass representing the second most abundant polysaccharide in the biosphere, after cellulose. The sequence is that of Endo-1,4-beta-xylanase 11A (XYN11A) from Mycosarcoma maydis (Corn smut fungus).